The sequence spans 334 residues: Mevalonate kinase (334 aa).

Residue 110–120 coordinates ATP; that stretch reads PVGAGLGSSAA. D161 serves as the catalytic Proton acceptor.

The protein belongs to the GHMP kinase family. Mevalonate kinase subfamily. Homodimer. Mg(2+) is required as a cofactor.

It localises to the cytoplasm. The enzyme catalyses (R)-mevalonate + ATP = (R)-5-phosphomevalonate + ADP + H(+). Its pathway is isoprenoid biosynthesis; isopentenyl diphosphate biosynthesis via mevalonate pathway; isopentenyl diphosphate from (R)-mevalonate: step 1/3. Catalyzes the phosphorylation of (R)-mevalonate (MVA) to (R)-mevalonate 5-phosphate (MVAP). Functions in the mevalonate (MVA) pathway leading to isopentenyl diphosphate (IPP), a key precursor for the biosynthesis of isoprenoid compounds such as archaeal membrane lipids. The protein is Mevalonate kinase of Pyrococcus furiosus (strain ATCC 43587 / DSM 3638 / JCM 8422 / Vc1).